A 394-amino-acid polypeptide reads, in one-letter code: Xylose isomerase (394 aa).

Residues His-54 and Asp-57 contribute to the active site. Residues Glu-181, Glu-217, His-220, Asp-245, Asp-255, Asp-257, and Asp-292 each contribute to the Mg(2+) site.

This sequence belongs to the xylose isomerase family. Homotetramer. Mg(2+) serves as cofactor.

It localises to the cytoplasm. It carries out the reaction alpha-D-xylose = alpha-D-xylulofuranose. The protein is Xylose isomerase (xylA) of Actinoplanes missouriensis (strain ATCC 14538 / DSM 43046 / CBS 188.64 / JCM 3121 / NBRC 102363 / NCIMB 12654 / NRRL B-3342 / UNCC 431).